The sequence spans 278 residues: Large ribosomal subunit protein uL2 (278 aa).

The disordered stretch occupies residues 226–278 (NPIDHPHGGGEGRTSGGRHPVTPWGKPTKGKKTRSNKSTDKFILISRHKRKKK).

The protein belongs to the universal ribosomal protein uL2 family. As to quaternary structure, part of the 50S ribosomal subunit. Forms a bridge to the 30S subunit in the 70S ribosome.

One of the primary rRNA binding proteins. Required for association of the 30S and 50S subunits to form the 70S ribosome, for tRNA binding and peptide bond formation. It has been suggested to have peptidyltransferase activity; this is somewhat controversial. Makes several contacts with the 16S rRNA in the 70S ribosome. In Rhodopseudomonas palustris (strain HaA2), this protein is Large ribosomal subunit protein uL2.